The sequence spans 461 residues: Asparagine--tRNA ligase (461 aa).

This sequence belongs to the class-II aminoacyl-tRNA synthetase family. As to quaternary structure, homodimer.

The protein localises to the cytoplasm. It catalyses the reaction tRNA(Asn) + L-asparagine + ATP = L-asparaginyl-tRNA(Asn) + AMP + diphosphate + H(+). In Geobacter metallireducens (strain ATCC 53774 / DSM 7210 / GS-15), this protein is Asparagine--tRNA ligase.